Here is a 475-residue protein sequence, read N- to C-terminus: tRNA-2-methylthio-N(6)-dimethylallyladenosine synthase (475 aa).

Residues 1–20 (MEQNLTTERSETSSSRAGTA) are disordered. The MTTase N-terminal domain maps to 25 to 145 (KKVFVKTYGC…LPSVVTRARA (121 aa)). Cys34, Cys70, Cys108, Cys186, Cys190, and Cys193 together coordinate [4Fe-4S] cluster. A Radical SAM core domain is found at 172–404 (RSRGVTAFLT…QALLAEQQRA (233 aa)). Residues 407–469 (ESLVGTEIDL…GHSLFCEPAG (63 aa)) enclose the TRAM domain.

Belongs to the methylthiotransferase family. MiaB subfamily. In terms of assembly, monomer. [4Fe-4S] cluster is required as a cofactor.

The protein localises to the cytoplasm. The catalysed reaction is N(6)-dimethylallyladenosine(37) in tRNA + (sulfur carrier)-SH + AH2 + 2 S-adenosyl-L-methionine = 2-methylsulfanyl-N(6)-dimethylallyladenosine(37) in tRNA + (sulfur carrier)-H + 5'-deoxyadenosine + L-methionine + A + S-adenosyl-L-homocysteine + 2 H(+). Catalyzes the methylthiolation of N6-(dimethylallyl)adenosine (i(6)A), leading to the formation of 2-methylthio-N6-(dimethylallyl)adenosine (ms(2)i(6)A) at position 37 in tRNAs that read codons beginning with uridine. The polypeptide is tRNA-2-methylthio-N(6)-dimethylallyladenosine synthase (Chelativorans sp. (strain BNC1)).